We begin with the raw amino-acid sequence, 787 residues long: DNA ligase (787 aa).

Residues 32–36 (DVEYD), 81–82 (SL), and Glu121 contribute to the NAD(+) site. Residue Lys123 is the N6-AMP-lysine intermediate of the active site. 4 residues coordinate NAD(+): Arg144, Glu181, Lys297, and Lys321. 4 residues coordinate Zn(2+): Cys415, Cys418, Cys445, and Cys451. The 85-residue stretch at 703–787 (VEGLPLAGQT…RLIELGVAVD (85 aa)) folds into the BRCT domain.

The protein belongs to the NAD-dependent DNA ligase family. LigA subfamily. The cofactor is Mg(2+). Mn(2+) is required as a cofactor.

The enzyme catalyses NAD(+) + (deoxyribonucleotide)n-3'-hydroxyl + 5'-phospho-(deoxyribonucleotide)m = (deoxyribonucleotide)n+m + AMP + beta-nicotinamide D-nucleotide.. Functionally, DNA ligase that catalyzes the formation of phosphodiester linkages between 5'-phosphoryl and 3'-hydroxyl groups in double-stranded DNA using NAD as a coenzyme and as the energy source for the reaction. It is essential for DNA replication and repair of damaged DNA. The protein is DNA ligase of Pseudomonas syringae pv. syringae (strain B728a).